A 360-amino-acid polypeptide reads, in one-letter code: MAGNSIGQLFKVTTFGESHGIALGCIVDGVPPNMALSEADIQPDLDRRKPGTSRYTTPRREDDEVQILSGVFEGKTTGTSIGLIIKNADQRSKDYGDIADKFRPGHADYTYQQKYGIRDYRGGGRSSARETAMRVAAGAIAKKYLREQFGIEVRGYLSQIGNVKINPETVADISKIDWQQVASNPFFCPDPVAVEGFDELIRELKKDGDSIGAKLTVVAENVPVGLGEPVFDRLDADLAHALMSINAVKAVEIGDGFDVVEQRGSEHRDEMTPQGFVSNHAGGILGGISSGQPIIAHIALKPTSSIMVPGRSVNLNNEQVELITKGRHDPCVGIRAVPIAEAMTAIILLDHLLRFKAQCR.

NADP(+)-binding residues include Arg-48 and Arg-54. Residues 125–127, 246–247, Gly-286, 301–305, and Arg-327 contribute to the FMN site; these read RSS, NA, and KPTSS.

It belongs to the chorismate synthase family. In terms of assembly, homotetramer. Requires FMNH2 as cofactor.

It carries out the reaction 5-O-(1-carboxyvinyl)-3-phosphoshikimate = chorismate + phosphate. It functions in the pathway metabolic intermediate biosynthesis; chorismate biosynthesis; chorismate from D-erythrose 4-phosphate and phosphoenolpyruvate: step 7/7. Functionally, catalyzes the anti-1,4-elimination of the C-3 phosphate and the C-6 proR hydrogen from 5-enolpyruvylshikimate-3-phosphate (EPSP) to yield chorismate, which is the branch point compound that serves as the starting substrate for the three terminal pathways of aromatic amino acid biosynthesis. This reaction introduces a second double bond into the aromatic ring system. The protein is Chorismate synthase of Actinobacillus pleuropneumoniae serotype 7 (strain AP76).